Here is a 156-residue protein sequence, read N- to C-terminus: ATP synthase subunit b (156 aa).

The chain crosses the membrane as a helical span at residues 11–31 (LIAFALFVWFCMKFVWPPIIN).

The protein belongs to the ATPase B chain family. As to quaternary structure, F-type ATPases have 2 components, F(1) - the catalytic core - and F(0) - the membrane proton channel. F(1) has five subunits: alpha(3), beta(3), gamma(1), delta(1), epsilon(1). F(0) has three main subunits: a(1), b(2) and c(10-14). The alpha and beta chains form an alternating ring which encloses part of the gamma chain. F(1) is attached to F(0) by a central stalk formed by the gamma and epsilon chains, while a peripheral stalk is formed by the delta and b chains.

The protein resides in the cell inner membrane. F(1)F(0) ATP synthase produces ATP from ADP in the presence of a proton or sodium gradient. F-type ATPases consist of two structural domains, F(1) containing the extramembraneous catalytic core and F(0) containing the membrane proton channel, linked together by a central stalk and a peripheral stalk. During catalysis, ATP synthesis in the catalytic domain of F(1) is coupled via a rotary mechanism of the central stalk subunits to proton translocation. In terms of biological role, component of the F(0) channel, it forms part of the peripheral stalk, linking F(1) to F(0). The protein is ATP synthase subunit b of Haemophilus influenzae (strain PittGG).